A 515-amino-acid chain; its full sequence is Elongation factor 1-alpha S (515 aa).

Residues Lys5 to Thr258 enclose the tr-type G domain. Positions Gly14–Ser21 are G1. Gly14–Ser21 is a GTP binding site. Lys55 carries the post-translational modification N6,N6-dimethyllysine. A G2 region spans residues Gly70 to Asp74. Lys79 carries the N6,N6,N6-trimethyllysine modification. The tract at residues Asp91–Gly94 is G3. GTP is bound by residues Asp91–His95 and Asn151–Asp154. Residues Asn151–Asp154 form a G4 region. Residues Lys187–Asp206 form a disordered region. Residues Asp189–Asp206 show a composition bias toward basic and acidic residues. The G5 stretch occupies residues Ser222–Trp224. An N6-methyllysine modification is found at Lys289. At Lys334 the chain carries N6,N6,N6-trimethyllysine. The interval Lys396 to Arg419 is disordered. Positions Gly398–Arg419 are enriched in basic and acidic residues. Lys441 bears the N6,N6,N6-trimethyllysine mark.

It belongs to the TRAFAC class translation factor GTPase superfamily. Classic translation factor GTPase family. EF-Tu/EF-1A subfamily.

Its subcellular location is the cytoplasm. In terms of biological role, this protein promotes the GTP-dependent binding of aminoacyl-tRNA to the A-site of ribosomes during protein biosynthesis. The chain is Elongation factor 1-alpha S (TEF-S) from Porphyra purpurea (Red seaweed).